A 214-amino-acid polypeptide reads, in one-letter code: Pyrrolidone-carboxylate peptidase (214 aa).

Catalysis depends on residues Glu-80, Cys-143, and His-166.

It belongs to the peptidase C15 family. Homotetramer.

Its subcellular location is the cytoplasm. The catalysed reaction is Release of an N-terminal pyroglutamyl group from a polypeptide, the second amino acid generally not being Pro.. Removes 5-oxoproline from various penultimate amino acid residues except L-proline. The protein is Pyrrolidone-carboxylate peptidase of Klebsiella pneumoniae (strain 342).